The primary structure comprises 1091 residues: MASESKSYARRDRLLEIEATVRKWWEDEDVFRAESCENLPKPGEKFFSTFPFPYMNGYLHIGHAFSLSKVDFASAYHRLRGANVLLPFGFHCTGMPIKASADKLRREIEQFGNPPVFTAEDTTKVPEVQEESSDTIALPIPGQFKGKKSKVAAKAGGQVYQWEIMRSFGLTDSEIANFREPSEWLYYFPPLAVEDLRAYGLGCDWRRSFVTTDVNPFFDAFVRWQMRKLKSMGKIVKDRRYTIFSPLDGQPCADHDRATGEGVQPQEYTLIKMEVVKPFPLKLGPLEGKRVFLAAATLRPETMYGQTNAWVLPDGKYGAYEISETEVFILTERAALNLAYQNFSKNPQEPSCLVELTGYDLIGLPLRSPLSVNEIIYALPMLTILTNKGTGIVTSVPSDAPDDYMALQDLIKKPALQDKYGVKTEWLPTEIIPIINIPEFGDKAAEKVCLDLKIKSQNDKEKLAEAKRLTYLKGFTEGTMLIGEFFGRKVQEIKPIIKTKLIETGEAIIYSEPEKPVMSRSGDECVVALTDQWYITYGESEWRKIAEECLSKMNLYSDETRHGFEHTLSWLNQWACSRSFGLGTRIPWDEQFLVESLSDSSLYMAYYTVAHIFHDGDMYKGSKSLIRPQQMNDEVWEYLFCDGPYPKSSDIPSAVLSEMKQEFDYWYPLDLRVSGKDLIQNHLTFFIYNHTALMANRNWPRGIRCNGHIMLNSEKMSKSTGNFRTLRQSIEEFSATGTRFCLADAGDGVDDANFAFETANAAILRLTKELTWMEEVLDVESSLRTGPPSTYADKVFENDMNIALRLTERAYKDCLFREALKNGFYDLQAARDEYRLSCGTGGMHHDLLLKFMDVQTRLIVPICPHFADYVWRKVLNKEGCVLTAGWPPSNEPDLVLKSANKYLQDSIVLMRKLLQKQLSGSKKGAKKGAQVTAVPEGKLKGLVYVNEQFDGWRAHCLRILQSRFDQQTCSFPPDTEMLAELSATLLQEGKNLKAIQKVCMPFLKFKKDEAISIGTQALNLRLPFGEIEVLQSNKDLIRRQLGLEEVEIYSASDPDDVSIAGPHASLLTQNPPSPGSPTAIFVTSTSVCPPS.

A 'HIGH' region motif is present at residues 53-63 (PYMNGYLHIGH). The 'KMSKS' region signature appears at 715–719 (KMSKS). Lys-718 is an ATP binding site.

Belongs to the class-I aminoacyl-tRNA synthetase family.

The protein localises to the cytoplasm. The protein resides in the cytosol. The enzyme catalyses tRNA(Leu) + L-leucine + ATP = L-leucyl-tRNA(Leu) + AMP + diphosphate. In terms of biological role, catalyzes the specific attachment of an amino acid to its cognate tRNA in a two step reaction: the amino acid (AA) is first activated by ATP to form AA-AMP and then transferred to the acceptor end of the tRNA. This is Leucine--tRNA ligase, cytoplasmic from Arabidopsis thaliana (Mouse-ear cress).